A 145-amino-acid polypeptide reads, in one-letter code: D-aminoacyl-tRNA deacylase (145 aa).

The Gly-cisPro motif, important for rejection of L-amino acids motif lies at 137 to 138 (GP).

This sequence belongs to the DTD family. Homodimer.

The protein localises to the cytoplasm. The catalysed reaction is glycyl-tRNA(Ala) + H2O = tRNA(Ala) + glycine + H(+). It catalyses the reaction a D-aminoacyl-tRNA + H2O = a tRNA + a D-alpha-amino acid + H(+). An aminoacyl-tRNA editing enzyme that deacylates mischarged D-aminoacyl-tRNAs. Also deacylates mischarged glycyl-tRNA(Ala), protecting cells against glycine mischarging by AlaRS. Acts via tRNA-based rather than protein-based catalysis; rejects L-amino acids rather than detecting D-amino acids in the active site. By recycling D-aminoacyl-tRNA to D-amino acids and free tRNA molecules, this enzyme counteracts the toxicity associated with the formation of D-aminoacyl-tRNA entities in vivo and helps enforce protein L-homochirality. This Escherichia coli O81 (strain ED1a) protein is D-aminoacyl-tRNA deacylase.